We begin with the raw amino-acid sequence, 411 residues long: Lissencephaly-1 homolog (411 aa).

The region spanning 9–41 (QREELNQAIADYLGTNGYADSLEAFRKEADLST) is the LisH domain. The stretch at 56–83 (TSVIRLQKKVMELEAKLTEAEKEVIEGA) forms a coiled coil. WD repeat units lie at residues 106 to 147 (GHRA…RTLK), 148 to 187 (GHTD…ECVK), 191 to 230 (GHDH…CVKT), 233 to 272 (GHRE…CKVE), 275 to 334 (DHEH…CLLT), 337 to 376 (GHDN…CMKT), and 379 to 411 (AHQH…WECR).

This sequence belongs to the WD repeat LIS1/nudF family.

Its subcellular location is the cytoplasm. The protein resides in the cytoskeleton. It localises to the microtubule organizing center. The protein localises to the centrosome. Positively regulates the activity of the minus-end directed microtubule motor protein dynein. May enhance dynein-mediated microtubule sliding by targeting dynein to the microtubule plus end. Required for several dynein- and microtubule-dependent processes. This Drosophila grimshawi (Hawaiian fruit fly) protein is Lissencephaly-1 homolog.